Consider the following 384-residue polypeptide: MAAYCSRVYHHHPVSPSTMQGSLARPSIHAGSASLTFRARPNSVSIVRCDADSPPEGSAVAGWAPPGPYTGRDPAARKPAWLRQRAAQGEKYARLRESLGELKLNTVCVEAQCPNIGECWNGGGGAGGDGDGIATATIMLLGDTCTRGCRFCAVKTSNKPPPPDALEPLRTAVAVASWGVDYVVLTSVDRDDLPDGGSGHFAQTVKALKELKPGILVECLTSDFRGDLEAVSSLASSGLDVFAHNIETVRSLQRIVRDPRAAYDQSLAVLKHAKNCKDGMVTKSSIMLGLGETDEEVKQTMCDLRAIDVDILTLGQYLQPTERHLRVREYVTPEKFDFWKEYGESLGFLYVASGPLVRSSYRAGELFVQNLVRRKKAELAPTLQ.

Residues 1-48 constitute a chloroplast transit peptide; that stretch reads MAAYCSRVYHHHPVSPSTMQGSLARPSIHAGSASLTFRARPNSVSIVR. Residues cysteine 108, cysteine 113, cysteine 119, cysteine 145, cysteine 149, cysteine 152, and serine 360 each coordinate [4Fe-4S] cluster. The region spanning 128 to 349 is the Radical SAM core domain; the sequence is GDGDGIATAT…KEYGESLGFL (222 aa).

Belongs to the radical SAM superfamily. Lipoyl synthase family. [4Fe-4S] cluster is required as a cofactor.

Its subcellular location is the plastid. The protein localises to the chloroplast. The catalysed reaction is [[Fe-S] cluster scaffold protein carrying a second [4Fe-4S](2+) cluster] + N(6)-octanoyl-L-lysyl-[protein] + 2 oxidized [2Fe-2S]-[ferredoxin] + 2 S-adenosyl-L-methionine + 4 H(+) = [[Fe-S] cluster scaffold protein] + N(6)-[(R)-dihydrolipoyl]-L-lysyl-[protein] + 4 Fe(3+) + 2 hydrogen sulfide + 2 5'-deoxyadenosine + 2 L-methionine + 2 reduced [2Fe-2S]-[ferredoxin]. Its pathway is protein modification; protein lipoylation via endogenous pathway; protein N(6)-(lipoyl)lysine from octanoyl-[acyl-carrier-protein]: step 2/2. Functionally, catalyzes the radical-mediated insertion of two sulfur atoms into the C-6 and C-8 positions of the octanoyl moiety bound to the lipoyl domains of lipoate-dependent enzymes, thereby converting the octanoylated domains into lipoylated derivatives. The chain is Lipoyl synthase 2, chloroplastic from Oryza sativa subsp. indica (Rice).